The following is a 218-amino-acid chain: Imidazole glycerol phosphate synthase subunit HisH (218 aa).

Positions 5–213 (RLAVIDYEAG…VEFVARCSPL (209 aa)) constitute a Glutamine amidotransferase type-1 domain. Catalysis depends on C83, which acts as the Nucleophile. Active-site residues include H188 and E190.

In terms of assembly, heterodimer of HisH and HisF.

It localises to the cytoplasm. The catalysed reaction is 5-[(5-phospho-1-deoxy-D-ribulos-1-ylimino)methylamino]-1-(5-phospho-beta-D-ribosyl)imidazole-4-carboxamide + L-glutamine = D-erythro-1-(imidazol-4-yl)glycerol 3-phosphate + 5-amino-1-(5-phospho-beta-D-ribosyl)imidazole-4-carboxamide + L-glutamate + H(+). It carries out the reaction L-glutamine + H2O = L-glutamate + NH4(+). It functions in the pathway amino-acid biosynthesis; L-histidine biosynthesis; L-histidine from 5-phospho-alpha-D-ribose 1-diphosphate: step 5/9. IGPS catalyzes the conversion of PRFAR and glutamine to IGP, AICAR and glutamate. The HisH subunit catalyzes the hydrolysis of glutamine to glutamate and ammonia as part of the synthesis of IGP and AICAR. The resulting ammonia molecule is channeled to the active site of HisF. In Synechococcus sp. (strain JA-2-3B'a(2-13)) (Cyanobacteria bacterium Yellowstone B-Prime), this protein is Imidazole glycerol phosphate synthase subunit HisH.